An 88-amino-acid polypeptide reads, in one-letter code: Large ribosomal subunit protein eL31 (88 aa).

This sequence belongs to the eukaryotic ribosomal protein eL31 family.

This Saccharolobus islandicus (strain Y.N.15.51 / Yellowstone #2) (Sulfolobus islandicus) protein is Large ribosomal subunit protein eL31.